An 875-amino-acid chain; its full sequence is Valine--tRNA ligase (875 aa).

The 'HIGH' region motif lies at 44–54 (PNVTGKLHLGH). The 'KMSKS' region motif lies at 520–524 (KMSKS). Lysine 523 is a binding site for ATP. Positions 804-875 (LEGLINIEEE…VRARLAQLKQ (72 aa)) form a coiled coil.

Belongs to the class-I aminoacyl-tRNA synthetase family. ValS type 1 subfamily. In terms of assembly, monomer.

The protein resides in the cytoplasm. The enzyme catalyses tRNA(Val) + L-valine + ATP = L-valyl-tRNA(Val) + AMP + diphosphate. In terms of biological role, catalyzes the attachment of valine to tRNA(Val). As ValRS can inadvertently accommodate and process structurally similar amino acids such as threonine, to avoid such errors, it has a 'posttransfer' editing activity that hydrolyzes mischarged Thr-tRNA(Val) in a tRNA-dependent manner. The protein is Valine--tRNA ligase of Anoxybacillus flavithermus (strain DSM 21510 / WK1).